The chain runs to 493 residues: Cytoplasmic tRNA 2-thiolation protein 2 (493 aa).

Position 489 is a phosphoserine (Ser489).

Belongs to the CTU2/NCS2 family. As to quaternary structure, interacts with NCS6 and URM1. May act by forming a heterodimer with NCS6.

It is found in the cytoplasm. It participates in tRNA modification; 5-methoxycarbonylmethyl-2-thiouridine-tRNA biosynthesis. Its function is as follows. Plays a central role in 2-thiolation of mcm(5)S(2)U at tRNA wobble positions of tRNA(Lys), tRNA(Glu) and tRNA(Gln). May act by forming a heterodimer with NCS6 that ligates sulfur from thiocarboxylated URM1 onto the uridine of tRNAs at wobble position. Prior mcm(5) tRNA modification by the elongator complex is required for 2-thiolation. May also be involved in protein urmylation. This is Cytoplasmic tRNA 2-thiolation protein 2 from Saccharomyces cerevisiae (strain AWRI1631) (Baker's yeast).